The following is a 677-amino-acid chain: DNA ligase (677 aa).

NAD(+)-binding positions include 32 to 36, 81 to 82, and glutamate 112; these read DAQYD and SL. Lysine 114 serves as the catalytic N6-AMP-lysine intermediate. NAD(+) is bound by residues arginine 135, glutamate 171, lysine 288, and lysine 312. Cysteine 416, cysteine 419, cysteine 434, and cysteine 439 together coordinate Zn(2+). Positions 598–677 constitute a BRCT domain; that stretch reads NKNMPFSGME…REFINMLEQS (80 aa).

The protein belongs to the NAD-dependent DNA ligase family. LigA subfamily. The cofactor is Mg(2+). Mn(2+) serves as cofactor.

It catalyses the reaction NAD(+) + (deoxyribonucleotide)n-3'-hydroxyl + 5'-phospho-(deoxyribonucleotide)m = (deoxyribonucleotide)n+m + AMP + beta-nicotinamide D-nucleotide.. DNA ligase that catalyzes the formation of phosphodiester linkages between 5'-phosphoryl and 3'-hydroxyl groups in double-stranded DNA using NAD as a coenzyme and as the energy source for the reaction. It is essential for DNA replication and repair of damaged DNA. The chain is DNA ligase from Dehalococcoides mccartyi (strain CBDB1).